The sequence spans 65 residues: MKTTILVVILGLTLLFALSAATELKDEERDCKGFQVKCKKDSECCSSYVCGRQWKWCVYPSPFGR.

A signal peptide spans 1–21 (MKTTILVVILGLTLLFALSAA). A propeptide spanning residues 22 to 29 (TELKDEER) is cleaved from the precursor. Intrachain disulfides connect C31-C45, C38-C50, and C44-C57.

The protein belongs to the neurotoxin 10 (Hwtx-1) family. 32 (Jztx-16) subfamily. In terms of tissue distribution, expressed by the venom gland.

It localises to the secreted. Probable ion channel inhibitor. The sequence is that of U11-theraphotoxin-Cg1b from Chilobrachys guangxiensis (Chinese earth tiger tarantula).